The sequence spans 296 residues: Glucokinase (296 aa).

This sequence belongs to the ROK (NagC/XylR) family. In terms of assembly, homodimer. It depends on a divalent metal cation as a cofactor.

It catalyses the reaction D-glucose + ATP = D-glucose 6-phosphate + ADP + H(+). Functionally, catalyzes the phosphorylation of D-glucose to D-glucose 6-phosphate using ATP as the phosphate donor. Has a broad hexose specificity, and in addition to glucose, which shows the highest catalytic efficiency, it can also phosphorylate fructose, mannose, galactose and sorbitol. Can also use CTP, GTP or UTP as phosphoryl donor. The chain is Glucokinase from Pyrobaculum calidifontis (strain DSM 21063 / JCM 11548 / VA1).